The sequence spans 159 residues: Ribosome maturation factor RimP (159 aa).

The protein belongs to the RimP family.

The protein localises to the cytoplasm. In terms of biological role, required for maturation of 30S ribosomal subunits. The protein is Ribosome maturation factor RimP of Streptococcus agalactiae serotype III (strain NEM316).